Here is an 843-residue protein sequence, read N- to C-terminus: Excretory canal abnormal protein 6 (843 aa).

Disordered regions lie at residues 54-135 (QLKD…EKKT), 568-601 (TLES…PAKT), 748-767 (TPLS…MTAE), and 773-843 (TMKP…PKWV). 2 stretches are compositionally biased toward pro residues: residues 66-76 (TPPPPPPPPPL) and 83-103 (APPP…PPPI). The FH2 domain maps to 127-512 (FLPKKEKKTK…KEEKKETQTT (386 aa)). Polar residues-rich tracts occupy residues 776-792 (PSVS…TSSH) and 819-830 (IPQSPTVTSSAR).

Belongs to the formin homology family. As to expression, expressed in the excretory cell and mostly accumulates at the tip of the excretory cell canals.

It localises to the cytoplasm. Its subcellular location is the cytoskeleton. Functionally, constitutively active protein required for microtubule and F-actin growth, structural maintenance and organization during excretory cell tubulogenesis. This is Excretory canal abnormal protein 6 from Caenorhabditis elegans.